The sequence spans 284 residues: 2-dehydro-3-deoxyphosphooctonate aldolase (284 aa).

This sequence belongs to the KdsA family.

Its subcellular location is the cytoplasm. The enzyme catalyses D-arabinose 5-phosphate + phosphoenolpyruvate + H2O = 3-deoxy-alpha-D-manno-2-octulosonate-8-phosphate + phosphate. The protein operates within carbohydrate biosynthesis; 3-deoxy-D-manno-octulosonate biosynthesis; 3-deoxy-D-manno-octulosonate from D-ribulose 5-phosphate: step 2/3. It participates in bacterial outer membrane biogenesis; lipopolysaccharide biosynthesis. The protein is 2-dehydro-3-deoxyphosphooctonate aldolase of Vibrio atlanticus (strain LGP32) (Vibrio splendidus (strain Mel32)).